Consider the following 358-residue polypeptide: Peptide chain release factor 1 (358 aa).

Residue Gln233 is modified to N5-methylglutamine.

Belongs to the prokaryotic/mitochondrial release factor family. In terms of processing, methylated by PrmC. Methylation increases the termination efficiency of RF1.

It localises to the cytoplasm. Peptide chain release factor 1 directs the termination of translation in response to the peptide chain termination codons UAG and UAA. This chain is Peptide chain release factor 1, found in Brevibacillus brevis (strain 47 / JCM 6285 / NBRC 100599).